A 946-amino-acid chain; its full sequence is MISIVNGTSTLSLVAGSVETLNQAINFYTNILGLSVHSEQNDWTYLSNDDNKMIVKIQLDTKSGLSLDQVNDRRTEIIAKLNVTDWRSLDTTSVLKVQNLVALIETLTTFNYTLQITPNELYPNEVYCVGPIGYIIGFTACDEPLTLVPPLQKSHPKPGLVSNLMSKSGSQSRNIEETKAVRRNIAVMTSGGDSQGMNAAVRAVVRATIFHGSKAFAVQEGYAGLVKGGPEYIKEMKWQDVRGFLSEGGTNIGTARCMEFKERWGRLKGCKNLIDAGIDGLIVCGGDGSLTGADLFRHEWPSLIQELKDKGEITNEQFERHKHLYICGMVGSIDNDMAMTDATIGGYSALERICRAIDYIDATANSHSRAFVVEVMGRHCGWLALMAGIATSADYIFIPEKPASSKDWQDQMCDIVGKHRAQGKRKTIVIVAEGAITSDLKPITSDEVKDVLVDRLGLDTRITVLGHVQRGGTAVAFDRTLATLQGVEAVKAILELTPDVPSPLIAIDENKICRRPLVEAVRITKSVASAIEAKDFEKAMSLRDHEFKEHLANFMAMNTANHEKPTLPREKRKKIAIINIGAPAGGMNSAVYAMATYCMSRGHTPYAIHNGFAGLSRHESVKSIEWIDIEGWNSIGGSEIGTNRQTPEETDIGMIAHYFEKYQFDGLIIVGGFEAFVSLEQLERSRAMYPSFRIPMVLIPATISNNVPGTEYSLGADTCLNSLMEYCDIVKQSASATRGTAFIIDVQGGNSGYIATFASLISGAQASYVPEEGISLQQLEMDINSLREAFAVEQGMTKSGKLIIKSSNASKVLTPHTLADIFNDECHGDFDTKTAIPGHVQQGGLPSPIDRSRGDRFAIRAVQFIEDHCDVLAPYRYELDFPIDDKKILNTAAVLGIKSSRLRFTSIRHLFDFETELGRRMPKTIYWNTIRDISDQLVGRTRLDKP.

Residues 1–559 (MISIVNGTST…HLANFMAMNT (559 aa)) form an N-terminal catalytic PFK domain 1 region. Residues Gly-192, 256-257 (RC), and 286-289 (GDGS) contribute to the ATP site. Asp-287 contacts Mg(2+). Beta-D-fructose 6-phosphate contacts are provided by residues 332–334 (SID), Arg-369, 376–378 (MGR), Glu-433, Arg-461, and 467–470 (HVQR). Asp-334 functions as the Proton acceptor in the catalytic mechanism. An interdomain linker region spans residues 560–573 (ANHEKPTLPREKRK). Residues 574–946 (KIAIINIGAP…LVGRTRLDKP (373 aa)) form a C-terminal regulatory PFK domain 2 region. Beta-D-fructose 2,6-bisphosphate is bound by residues Arg-644, 702-706 (TISNN), 747-749 (QGG), Lys-833, 839-842 (HVQQ), and Arg-920.

It belongs to the phosphofructokinase type A (PFKA) family. ATP-dependent PFK group I subfamily. Eukaryotic two domain clade 'E' sub-subfamily. In terms of assembly, heterooctamer of 4 alpha and 4 beta chains. Requires Mg(2+) as cofactor.

It localises to the cytoplasm. The catalysed reaction is beta-D-fructose 6-phosphate + ATP = beta-D-fructose 1,6-bisphosphate + ADP + H(+). It participates in carbohydrate degradation; glycolysis; D-glyceraldehyde 3-phosphate and glycerone phosphate from D-glucose: step 3/4. Allosterically activated by ADP, AMP, or fructose 2,6-bisphosphate, and allosterically inhibited by ATP or citrate. Functionally, catalyzes the phosphorylation of D-fructose 6-phosphate to fructose 1,6-bisphosphate by ATP, the first committing step of glycolysis. In Candida albicans (Yeast), this protein is ATP-dependent 6-phosphofructokinase subunit beta (PFK2).